A 76-amino-acid chain; its full sequence is Exodeoxyribonuclease 7 small subunit (76 aa).

It belongs to the XseB family. As to quaternary structure, heterooligomer composed of large and small subunits.

It localises to the cytoplasm. It catalyses the reaction Exonucleolytic cleavage in either 5'- to 3'- or 3'- to 5'-direction to yield nucleoside 5'-phosphates.. Its function is as follows. Bidirectionally degrades single-stranded DNA into large acid-insoluble oligonucleotides, which are then degraded further into small acid-soluble oligonucleotides. The chain is Exodeoxyribonuclease 7 small subunit from Bacillus cereus (strain G9842).